Reading from the N-terminus, the 115-residue chain is Phosphoribosyl-AMP cyclohydrolase (115 aa).

Aspartate 80 contributes to the Mg(2+) binding site. Cysteine 81 is a binding site for Zn(2+). Aspartate 82 and aspartate 84 together coordinate Mg(2+). Cysteine 97 and cysteine 104 together coordinate Zn(2+).

Belongs to the PRA-CH family. In terms of assembly, homodimer. Mg(2+) is required as a cofactor. It depends on Zn(2+) as a cofactor.

It is found in the cytoplasm. It catalyses the reaction 1-(5-phospho-beta-D-ribosyl)-5'-AMP + H2O = 1-(5-phospho-beta-D-ribosyl)-5-[(5-phospho-beta-D-ribosylamino)methylideneamino]imidazole-4-carboxamide. The protein operates within amino-acid biosynthesis; L-histidine biosynthesis; L-histidine from 5-phospho-alpha-D-ribose 1-diphosphate: step 3/9. Its function is as follows. Catalyzes the hydrolysis of the adenine ring of phosphoribosyl-AMP. This chain is Phosphoribosyl-AMP cyclohydrolase, found in Mycobacterium avium (strain 104).